Consider the following 127-residue polypeptide: Fluoride-specific ion channel FluC (127 aa).

2 helical membrane-spanning segments follow: residues 4-24 (WFWIGLGGAAGTLARYGLSTW) and 36-56 (GTLAVNVIGSFLLGAIGEIAA). The Na(+) site is built by Gly75 and Thr78. A helical transmembrane segment spans residues 100–120 (LANIAITLVVCLLAGVLGMVV).

It belongs to the fluoride channel Fluc/FEX (TC 1.A.43) family.

It localises to the cell inner membrane. It carries out the reaction fluoride(in) = fluoride(out). Its activity is regulated as follows. Na(+) is not transported, but it plays an essential structural role and its presence is essential for fluoride channel function. Fluoride-specific ion channel. Important for reducing fluoride concentration in the cell, thus reducing its toxicity. The chain is Fluoride-specific ion channel FluC from Sorangium cellulosum (strain So ce56) (Polyangium cellulosum (strain So ce56)).